We begin with the raw amino-acid sequence, 171 residues long: Viral CASP8 and FADD-like apoptosis regulator (171 aa).

DED domains follow at residues 1–74 and 92–171; these read MSHY…RIFG and PFRC…NLQV.

As to quaternary structure, associates with the death-inducing signaling complex (DISC) formed by TNFRSF6, FADD and caspase-8. Interacts with FADD.

In terms of biological role, inhibits TNFRSF1A, TNFRSF6, TNFRSF10 and TNFRSF12 induced apoptosis. May interfere with caspase-8 recruitment and activation at the death-inducing signaling complex (DISC). May lead to higher virus production and contribute to virus persistence and oncogenicity. The chain is Viral CASP8 and FADD-like apoptosis regulator from Equus caballus (Horse).